The following is a 187-amino-acid chain: Putative gamma-glutamylcyclotransferase At3g02910 (187 aa).

17–20 (YGTL) is a substrate binding site. E92 serves as the catalytic Proton acceptor.

Belongs to the gamma-glutamylcyclotransferase family.

Putative gamma-glutamylcyclotransferase. The chain is Putative gamma-glutamylcyclotransferase At3g02910 from Arabidopsis thaliana (Mouse-ear cress).